The chain runs to 240 residues: 7-cyano-7-deazaguanine synthase (240 aa).

F18 to L28 is a binding site for ATP. C197, C206, C209, and C212 together coordinate Zn(2+).

This sequence belongs to the QueC family. It depends on Zn(2+) as a cofactor.

The enzyme catalyses 7-carboxy-7-deazaguanine + NH4(+) + ATP = 7-cyano-7-deazaguanine + ADP + phosphate + H2O + H(+). It participates in purine metabolism; 7-cyano-7-deazaguanine biosynthesis. Its function is as follows. Catalyzes the ATP-dependent conversion of 7-carboxy-7-deazaguanine (CDG) to 7-cyano-7-deazaguanine (preQ(0)). The chain is 7-cyano-7-deazaguanine synthase from Shewanella putrefaciens (strain CN-32 / ATCC BAA-453).